Here is a 90-residue protein sequence, read N- to C-terminus: Antitoxin epsilon (90 aa).

This sequence belongs to the epsilon antitoxin family. As to quaternary structure, in the presence of the zeta toxin, forms an inactive PezA(2)PezT(2) heterotetramer. The heterotetramer is still able to bind the zeta toxin substrate UNAG.

Functionally, antitoxin component of a type II toxin-antitoxin (TA) system. Neutralizes the toxic effect of cognate zeta toxin. Part of a postsegregational killing (PSK) system involved in the killing of plasmid-free cells. Continuous synthesis of the epsilon antitoxin is required to counteract the zeta toxin. In Streptococcus pyogenes, this protein is Antitoxin epsilon.